Consider the following 151-residue polypeptide: Ribosome maturation factor RimP (151 aa).

The protein belongs to the RimP family.

The protein localises to the cytoplasm. Its function is as follows. Required for maturation of 30S ribosomal subunits. This Aliivibrio fischeri (strain ATCC 700601 / ES114) (Vibrio fischeri) protein is Ribosome maturation factor RimP.